The chain runs to 73 residues: Gas vesicle protein A (73 aa).

The protein belongs to the gas vesicle GvpA family. As to quaternary structure, the gas vesicle shell is 2 nm thick and consists of a single layer of this protein. It forms helical ribs nearly perpendicular to the long axis of the vesicle.

The protein resides in the gas vesicle shell. Gas vesicles are hollow, gas filled proteinaceous nanostructures found in some microorganisms. During planktonic growth they allow positioning of the organism at a favorable depth for light or nutrient acquisition. GvpA forms the protein shell. This Nostoc punctiforme (strain ATCC 29133 / PCC 73102) protein is Gas vesicle protein A.